Here is a 202-residue protein sequence, read N- to C-terminus: HTH-type transcriptional regulator BetI (202 aa).

An HTH tetR-type domain is found at 8–68 (PIRRRQLIDA…ATMRDITRQL (61 aa)). The segment at residues 31-50 (TIAQIARRAGVSAGIISHYF) is a DNA-binding region (H-T-H motif).

It participates in amine and polyamine biosynthesis; betaine biosynthesis via choline pathway [regulation]. Its function is as follows. Repressor involved in the biosynthesis of the osmoprotectant glycine betaine. It represses transcription of the choline transporter BetT and the genes of BetAB involved in the synthesis of glycine betaine. The chain is HTH-type transcriptional regulator BetI from Cronobacter sakazakii (strain ATCC BAA-894) (Enterobacter sakazakii).